Consider the following 248-residue polypeptide: Triosephosphate isomerase (248 aa).

Residue 9-11 (NWK) coordinates substrate. Catalysis depends on histidine 94, which acts as the Electrophile. The active-site Proton acceptor is the glutamate 166. Residues glycine 172, serine 212, and 233 to 234 (GG) contribute to the substrate site.

The protein belongs to the triosephosphate isomerase family. In terms of assembly, homodimer.

The protein localises to the cytoplasm. The catalysed reaction is D-glyceraldehyde 3-phosphate = dihydroxyacetone phosphate. It participates in carbohydrate biosynthesis; gluconeogenesis. Its pathway is carbohydrate degradation; glycolysis; D-glyceraldehyde 3-phosphate from glycerone phosphate: step 1/1. Involved in the gluconeogenesis. Catalyzes stereospecifically the conversion of dihydroxyacetone phosphate (DHAP) to D-glyceraldehyde-3-phosphate (G3P). The sequence is that of Triosephosphate isomerase from Clostridium botulinum (strain Loch Maree / Type A3).